Reading from the N-terminus, the 346-residue chain is NADH-quinone oxidoreductase subunit H 2 (346 aa).

Helical transmembrane passes span I14 to A34, F83 to I103, V136 to G156, S172 to L192, G208 to A228, F260 to L280, L289 to I309, and L324 to V344.

This sequence belongs to the complex I subunit 1 family. In terms of assembly, NDH-1 is composed of 14 different subunits. Subunits NuoA, H, J, K, L, M, N constitute the membrane sector of the complex.

It localises to the cell inner membrane. The enzyme catalyses a quinone + NADH + 5 H(+)(in) = a quinol + NAD(+) + 4 H(+)(out). Functionally, NDH-1 shuttles electrons from NADH, via FMN and iron-sulfur (Fe-S) centers, to quinones in the respiratory chain. The immediate electron acceptor for the enzyme in this species is believed to be ubiquinone. Couples the redox reaction to proton translocation (for every two electrons transferred, four hydrogen ions are translocated across the cytoplasmic membrane), and thus conserves the redox energy in a proton gradient. This subunit may bind ubiquinone. This chain is NADH-quinone oxidoreductase subunit H 2, found in Geobacter metallireducens (strain ATCC 53774 / DSM 7210 / GS-15).